The primary structure comprises 347 residues: NADH-ubiquinone oxidoreductase chain 2 (347 aa).

11 consecutive transmembrane segments (helical) span residues Pro-3–Gly-23, His-25–Met-45, Tyr-59–Met-79, Ile-96–Pro-116, Gly-127–Pro-147, Gly-148–Gly-168, Ile-178–Pro-198, Thr-201–Ile-221, Thr-247–Ile-267, Ile-276–Leu-296, and Leu-325–Ile-345.

Belongs to the complex I subunit 2 family. As to quaternary structure, core subunit of respiratory chain NADH dehydrogenase (Complex I) which is composed of 45 different subunits. Interacts with TMEM242.

The protein resides in the mitochondrion inner membrane. The enzyme catalyses a ubiquinone + NADH + 5 H(+)(in) = a ubiquinol + NAD(+) + 4 H(+)(out). In terms of biological role, core subunit of the mitochondrial membrane respiratory chain NADH dehydrogenase (Complex I) which catalyzes electron transfer from NADH through the respiratory chain, using ubiquinone as an electron acceptor. Essential for the catalytic activity and assembly of complex I. The protein is NADH-ubiquinone oxidoreductase chain 2 of Ozimops beccarii (Beccari's free-tailed bat).